The sequence spans 282 residues: Probable transcription factor At1g66420 (282 aa).

Residues 33-73 (SKKNEEFCGGSGKVQPSEMKRRSEGTSTDMTSKRAKKVSAE) are disordered.

It belongs to the GeBP family.

In Arabidopsis thaliana (Mouse-ear cress), this protein is Probable transcription factor At1g66420.